The chain runs to 367 residues: Heme A synthase (367 aa).

A run of 5 helical transmembrane segments spans residues 26-46 (IRGW…VGGA), 111-131 (LLAR…WLTG), 139-159 (LPLL…WWMV), 174-194 (LATH…IYRG), and 212-232 (AGII…VAGL). H274 serves as a coordination point for heme. The next 3 helical transmembrane spans lie at 276 to 296 (AGAY…LRAA), 305 to 325 (SVLL…TLLL), and 327 to 347 (VPIV…GFAI). Residue H335 coordinates heme.

The protein belongs to the COX15/CtaA family. Type 2 subfamily. As to quaternary structure, interacts with CtaB. Heme b is required as a cofactor.

Its subcellular location is the cell membrane. The catalysed reaction is Fe(II)-heme o + 2 A + H2O = Fe(II)-heme a + 2 AH2. It participates in porphyrin-containing compound metabolism; heme A biosynthesis; heme A from heme O: step 1/1. In terms of biological role, catalyzes the conversion of heme O to heme A by two successive hydroxylations of the methyl group at C8. The first hydroxylation forms heme I, the second hydroxylation results in an unstable dihydroxymethyl group, which spontaneously dehydrates, resulting in the formyl group of heme A. In Sinorhizobium fredii (strain NBRC 101917 / NGR234), this protein is Heme A synthase.